Consider the following 156-residue polypeptide: ATP synthase subunit b (156 aa).

The helical transmembrane segment at 12-32 (IAFAIFVLFCMKFIWPALMGA) threads the bilayer.

Belongs to the ATPase B chain family. In terms of assembly, F-type ATPases have 2 components, F(1) - the catalytic core - and F(0) - the membrane proton channel. F(1) has five subunits: alpha(3), beta(3), gamma(1), delta(1), epsilon(1). F(0) has three main subunits: a(1), b(2) and c(10-14). The alpha and beta chains form an alternating ring which encloses part of the gamma chain. F(1) is attached to F(0) by a central stalk formed by the gamma and epsilon chains, while a peripheral stalk is formed by the delta and b chains.

It is found in the cell inner membrane. Its function is as follows. F(1)F(0) ATP synthase produces ATP from ADP in the presence of a proton or sodium gradient. F-type ATPases consist of two structural domains, F(1) containing the extramembraneous catalytic core and F(0) containing the membrane proton channel, linked together by a central stalk and a peripheral stalk. During catalysis, ATP synthesis in the catalytic domain of F(1) is coupled via a rotary mechanism of the central stalk subunits to proton translocation. Component of the F(0) channel, it forms part of the peripheral stalk, linking F(1) to F(0). The sequence is that of ATP synthase subunit b from Psychrobacter sp. (strain PRwf-1).